A 672-amino-acid polypeptide reads, in one-letter code: Negative growth regulatory protein NGR1 (672 aa).

The residue at position 1 (Met-1) is an N-acetylmethionine. Polar residues-rich tracts occupy residues 1 to 13 and 23 to 32; these read MMSN…QRQE and SSTVETSTEP. Disordered regions lie at residues 1-40 and 77-102; these read MMSN…WMGD and SSTS…NSTD. The residue at position 2 (Met-2) is an N-acetylserine. 3 RRM domains span residues 36-159, 192-271, and 360-432; these read LWMG…YSPT, FSLF…YATP, and TTVF…WGRP. Residues 77 to 96 are compositionally biased toward low complexity; the sequence is SSTSSSNNNTSEENAENQQS. Ser-524 is subject to Phosphoserine. The tract at residues 640–672 is disordered; sequence LNIAPNSNNSKSSIMNKHPNRNNVPPIHPSLLH. Over residues 645–656 the composition is skewed to low complexity; it reads NSNNSKSSIMNK.

In terms of biological role, may be an RNA-binding protein involved in control of an RNA processing pathway that influences the regulation of cell growth in early log phase. Can bind to RNA and single-stranded DNA but not double-stranded DNA. The polypeptide is Negative growth regulatory protein NGR1 (NGR1) (Saccharomyces cerevisiae (strain ATCC 204508 / S288c) (Baker's yeast)).